The chain runs to 125 residues: Holo-[acyl-carrier-protein] synthase (125 aa).

The Mg(2+) site is built by Asp-7 and Glu-56.

The protein belongs to the P-Pant transferase superfamily. AcpS family. Mg(2+) is required as a cofactor.

The protein resides in the cytoplasm. It carries out the reaction apo-[ACP] + CoA = holo-[ACP] + adenosine 3',5'-bisphosphate + H(+). Functionally, transfers the 4'-phosphopantetheine moiety from coenzyme A to a Ser of acyl-carrier-protein. The chain is Holo-[acyl-carrier-protein] synthase from Chlamydia muridarum (strain MoPn / Nigg).